Consider the following 185-residue polypeptide: Ribosome-recycling factor (185 aa).

A disordered region spans residues 141–161; that stretch reads KQEKDKKISEDDLKRAEKEVQ.

This sequence belongs to the RRF family.

The protein localises to the cytoplasm. Responsible for the release of ribosomes from messenger RNA at the termination of protein biosynthesis. May increase the efficiency of translation by recycling ribosomes from one round of translation to another. This is Ribosome-recycling factor from Geotalea uraniireducens (strain Rf4) (Geobacter uraniireducens).